The primary structure comprises 692 residues: Glycine--tRNA ligase beta subunit (692 aa).

It belongs to the class-II aminoacyl-tRNA synthetase family. As to quaternary structure, tetramer of two alpha and two beta subunits.

The protein resides in the cytoplasm. It carries out the reaction tRNA(Gly) + glycine + ATP = glycyl-tRNA(Gly) + AMP + diphosphate. This chain is Glycine--tRNA ligase beta subunit, found in Pseudoalteromonas atlantica (strain T6c / ATCC BAA-1087).